Here is a 304-residue protein sequence, read N- to C-terminus: Small ribosomal subunit protein uS3 (304 aa).

The KH type-2 domain occupies 17–86; it reads MDEYFAKQLS…NPQIDAQEVK (70 aa).

This sequence belongs to the universal ribosomal protein uS3 family. In terms of assembly, part of the 30S ribosomal subunit.

Functionally, binds the lower part of the 30S subunit head. This is Small ribosomal subunit protein uS3 from Methanococcoides burtonii (strain DSM 6242 / NBRC 107633 / OCM 468 / ACE-M).